Consider the following 461-residue polypeptide: Argininosuccinate lyase (461 aa).

This sequence belongs to the lyase 1 family. Argininosuccinate lyase subfamily.

Its subcellular location is the cytoplasm. The catalysed reaction is 2-(N(omega)-L-arginino)succinate = fumarate + L-arginine. It functions in the pathway amino-acid biosynthesis; L-arginine biosynthesis; L-arginine from L-ornithine and carbamoyl phosphate: step 3/3. The protein is Argininosuccinate lyase of Chlorobium chlorochromatii (strain CaD3).